A 323-amino-acid polypeptide reads, in one-letter code: Beta-ketoacyl-[acyl-carrier-protein] synthase III (323 aa).

Active-site residues include cysteine 113 and histidine 250. The tract at residues glutamine 251 to arginine 255 is ACP-binding. Asparagine 280 is a catalytic residue.

It belongs to the thiolase-like superfamily. FabH family. As to quaternary structure, homodimer.

It localises to the cytoplasm. The enzyme catalyses malonyl-[ACP] + acetyl-CoA + H(+) = 3-oxobutanoyl-[ACP] + CO2 + CoA. It participates in lipid metabolism; fatty acid biosynthesis. In terms of biological role, catalyzes the condensation reaction of fatty acid synthesis by the addition to an acyl acceptor of two carbons from malonyl-ACP. Catalyzes the first condensation reaction which initiates fatty acid synthesis and may therefore play a role in governing the total rate of fatty acid production. Possesses both acetoacetyl-ACP synthase and acetyl transacylase activities. Its substrate specificity determines the biosynthesis of branched-chain and/or straight-chain of fatty acids. This Rhizobium johnstonii (strain DSM 114642 / LMG 32736 / 3841) (Rhizobium leguminosarum bv. viciae) protein is Beta-ketoacyl-[acyl-carrier-protein] synthase III.